The primary structure comprises 352 residues: UDP-3-O-acylglucosamine N-acyltransferase (352 aa).

His244 serves as the catalytic Proton acceptor.

It belongs to the transferase hexapeptide repeat family. LpxD subfamily. As to quaternary structure, homotrimer.

The enzyme catalyses a UDP-3-O-[(3R)-3-hydroxyacyl]-alpha-D-glucosamine + a (3R)-hydroxyacyl-[ACP] = a UDP-2-N,3-O-bis[(3R)-3-hydroxyacyl]-alpha-D-glucosamine + holo-[ACP] + H(+). Its pathway is bacterial outer membrane biogenesis; LPS lipid A biosynthesis. Functionally, catalyzes the N-acylation of UDP-3-O-acylglucosamine using 3-hydroxyacyl-ACP as the acyl donor. Is involved in the biosynthesis of lipid A, a phosphorylated glycolipid that anchors the lipopolysaccharide to the outer membrane of the cell. The polypeptide is UDP-3-O-acylglucosamine N-acyltransferase (Leptospira biflexa serovar Patoc (strain Patoc 1 / Ames)).